A 715-amino-acid chain; its full sequence is Epidermal growth factor receptor kinase substrate 8-like protein 2 (715 aa).

The PID domain occupies 46 to 202; the sequence is MHETSQYHVQ…RQRQSILPPP (157 aa). The segment at 183 to 243 is disordered; that stretch reads QTLKGHQEKI…GFRRRESQEE (61 aa). Positions 199 to 208 are enriched in pro residues; that stretch reads LPPPQGPAPI. Basic and acidic residues-rich tracts occupy residues 213–222 and 234–243; these read RGGDSPEAKN and GFRRRESQEE. Ser-240 is modified (phosphoserine). Thr-303 bears the Phosphothreonine mark. The interval 448-487 is disordered; that stretch reads VSPVSRQSIRNSQKHSPTSEPTPPGDALPPVSSPHTHRGY. Ser-449 carries the post-translational modification Phosphoserine. Positions 451-466 are enriched in polar residues; it reads VSRQSIRNSQKHSPTS. Thr-469 carries the post-translational modification Phosphothreonine. An SH3 domain is found at 492-551; that stretch reads AMAKYVKILYDFTARNANELSVLKDEVLEVLEDGRQWWKLRSRSGQAGYVPCNILGEARP. Ser-570 is subject to Phosphoserine.

The protein belongs to the EPS8 family. As to quaternary structure, interacts with ABI1. Part of a complex that contains SOS1, ABI1 and EPS8L2. Associates with F-actin. In terms of tissue distribution, detected in fibroblasts and placenta.

It is found in the cytoplasm. The protein localises to the cell projection. It localises to the stereocilium. Stimulates guanine exchange activity of SOS1. May play a role in membrane ruffling and remodeling of the actin cytoskeleton. In the cochlea, is required for stereocilia maintenance in adult hair cells. The chain is Epidermal growth factor receptor kinase substrate 8-like protein 2 (EPS8L2) from Homo sapiens (Human).